The following is a 248-amino-acid chain: MTRRYWNITLDEMMDASVHLGHDTKQWNPKMAPYIFPKCTTRKGIHLTNLFTTARFLSEACDVVFNAASRENQFLIVGTKKKAADSVLRAAIRAQCHYVNKKWLSGMLTNWSTTETRLHKFRDLRIKEKRGRLKRLPKRDAAILKRQLSHLQRSLGGIKYMTKLPDFVIIIDQQKDYTALRECIKLGIPTISLIDTNSDPDLASLSIPANDDSRSSIKFILNKLVFAIREGRYESIGNSGLKKRKRTY.

This sequence belongs to the universal ribosomal protein uS2 family.

It is found in the plastid. It localises to the chloroplast. In Trachelium caeruleum (Blue throatwort), this protein is Small ribosomal subunit protein uS2c (rps2).